Here is a 143-residue protein sequence, read N- to C-terminus: Transcriptional regulator MraZ (143 aa).

2 consecutive SpoVT-AbrB domains span residues 5-47 (EYNH…SSDE) and 76-119 (ASEC…SNVE).

Belongs to the MraZ family. As to quaternary structure, forms oligomers.

Its subcellular location is the cytoplasm. The protein localises to the nucleoid. In Alkaliphilus oremlandii (strain OhILAs) (Clostridium oremlandii (strain OhILAs)), this protein is Transcriptional regulator MraZ.